Here is a 1376-residue protein sequence, read N- to C-terminus: MAGRPTGGPQGAPSHDLLLDLENDQPVYGGGQRSTLNDDDLMRTYTRDQESGQDQGRPSVSYDDFIGAGQSRQHGTGSQPGGPGQSSSSNNNNNNNVSAPYSRSGRQYSQTSDLGNYQRYADDFDDYPADGDSFYQQGGALNGGGADAAARHNARNRNSVLTMGGGFFGKMKNRLGMGQGYSEMDLPLTEPGGGGGGAGGGGHSRADSSGIDPPKRDKKFDMGNFKFGFGRSKPDPSTLGPRIIHLNNPPANAANKYVNNHVSTAKYNIATFLPKFLLEQFSKIANVFFLFTAALQQIPGLSPTNRFTTIIPLVAVLMVSAGKELVEDYRRKQADAALNTSRAQVLRGSTFEETKWINVAVGDIVRVESEEPFPADIVLLASSEPEGLCYIETANLDGETNLKIKQALPETSQMVSSSELSRLGGRMKSEQPNSSLYTYEATLTMQTGGGEKELPLNPEQLLLRGATLRNTPWIHGVVVFTGHETKLMRNATAAPIKRTKVEKKLNTLVLLLVGILMVLSIISTVGDLIIRRVEGDAISYLMLDQPDTAGKIAETFFKDMVTYWVLFSSLVPISLFVTVEMVKYWHGILINDDLDMYYDRNDTPANCRTSNLVEELGMVEFVFSDKTGTLTCNMMEFKQASIAGIQYADEVPEDRRATIQDGVEVGLHDYKRLKENRKNHSSAPAIDHFLALLATCHTVIPEKGDEKGGKIKYQAASPDEGALVDGAATLGYTFTDRKPKAVFIEVDGQTLEYELLAVCEFNSTRKRMSTIYRCPDGVIRVYCKGADTVILERLNENNPHVEQTLTHLEEYASEGLRTLCLAMREVSEQEFQEWNQVYEKAATTVGGNRAEELDKASEMIEHDFFLLGATAIEDRLQDGVPETIHTLQEANIKVWVLTGDRQETAINIGMSCKLLSEEMMLLIINEESAAATRDNIEKKLEAIRAQGDRTIELETLALVIDGKSLTYALEKDLEKMFLDLAIMCKAVICCRVSPLQKALVVKLVKKYQKESILLAIGDGANDVSMIQAAHIGVGISGEEGLQAARSADVSIAQFRFLKKLLLVHGAWSYQRVAKTILYSFYKNITLYMTQFWYTFRNVFSGAVIYESWTLTFYNVFYTVLPPLALGILDQFISARLLDRYPQLYSMGQQNQFFRMKVFIEWLLNAVYHSIILYVFGELIWHGDLILENGQIAGHWMWGTALYAPVLLTVLGKAGLVTSNWTKYHVIAIPGSMAIWWIFIAVYGTVAPMIPFSPEFHGIVPKLYSSPIFWLQSFALAILCLLRDFAWKYAKRMYRPESYHHIQEIQKYNIQDYRPRMEQFQKAIRKVRQVQRMRKQRGYAFSQADESQARVLQAYDTTQNRGRYGEMTSSRPQGQGT.

A compositionally biased stretch (gly residues) spans 1 to 10 (MAGRPTGGPQ). 2 disordered regions span residues 1–151 (MAGR…AAAR) and 180–217 (GYSEMDLPLTEPGGGGGGAGGGGHSRADSSGIDPPKRD). The Cytoplasmic portion of the chain corresponds to 1-306 (MAGRPTGGPQ…QIPGLSPTNR (306 aa)). Residues 40–50 (DLMRTYTRDQE) show a composition bias toward basic and acidic residues. Low complexity predominate over residues 85–96 (QSSSSNNNNNNN). Residues 97 to 115 (VSAPYSRSGRQYSQTSDLG) are compositionally biased toward polar residues. Over residues 191–203 (PGGGGGGAGGGGH) the composition is skewed to gly residues. The chain crosses the membrane as a helical span at residues 307 to 327 (FTTIIPLVAVLMVSAGKELVE). Over 328–509 (DYRRKQADAA…KVEKKLNTLV (182 aa)) the chain is Extracellular. Residues Asn-339, Asn-433, and Asn-490 are each glycosylated (N-linked (GlcNAc...) asparagine). The chain crosses the membrane as a helical span at residues 510–530 (LLLVGILMVLSIISTVGDLII). Topologically, residues 531–559 (RRVEGDAISYLMLDQPDTAGKIAETFFKD) are cytoplasmic. A helical membrane pass occupies residues 560–580 (MVTYWVLFSSLVPISLFVTVE). The Extracellular segment spans residues 581-1107 (MVKYWHGILI…VFSGAVIYES (527 aa)). Residue Asp-625 is the 4-aspartylphosphate intermediate of the active site. Positions 625, 626, and 627 each coordinate ATP. Asp-625 is a Mg(2+) binding site. Thr-627 is a Mg(2+) binding site. N-linked (GlcNAc...) asparagine glycosylation is present at Asn-679. ATP contacts are provided by Glu-720 and Phe-761. A glycan (N-linked (GlcNAc...) asparagine) is linked at Asn-762. ATP contacts are provided by Ser-763, Lys-766, Lys-784, Arg-817, Thr-818, Thr-898, Gly-899, Asp-900, Arg-991, and Lys-997. Asp-1018 provides a ligand contact to Mg(2+). Residues Asn-1021 and Asp-1022 each contribute to the ATP site. Mg(2+) is bound at residue Asp-1022. Asn-1083 carries an N-linked (GlcNAc...) asparagine glycan. The helical transmembrane segment at 1108–1128 (WTLTFYNVFYTVLPPLALGIL) threads the bilayer. Residues 1129–1165 (DQFISARLLDRYPQLYSMGQQNQFFRMKVFIEWLLNA) lie on the Cytoplasmic side of the membrane. Residues 1166–1186 (VYHSIILYVFGELIWHGDLIL) form a helical membrane-spanning segment. The Extracellular segment spans residues 1187–1190 (ENGQ). The helical transmembrane segment at 1191–1211 (IAGHWMWGTALYAPVLLTVLG) threads the bilayer. Lys-1212 contributes to the a 1,2-diacyl-sn-glycero-3-phospho-(1D-myo-inositol 4-phosphate) binding site. At 1212 to 1224 (KAGLVTSNWTKYH) the chain is on the cytoplasmic side. The helical transmembrane segment at 1225–1245 (VIAIPGSMAIWWIFIAVYGTV) threads the bilayer. Residues 1246-1257 (APMIPFSPEFHG) are Extracellular-facing. Residues 1258-1278 (IVPKLYSSPIFWLQSFALAIL) form a helical membrane-spanning segment. Over 1279–1376 (CLLRDFAWKY…TSSRPQGQGT (98 aa)) the chain is Cytoplasmic. Arg-1282, Trp-1286, Lys-1287, Tyr-1298, and His-1299 together coordinate a 1,2-diacyl-sn-glycero-3-phospho-(1D-myo-inositol 4-phosphate).

It belongs to the cation transport ATPase (P-type) (TC 3.A.3) family. Type IV subfamily. Mg(2+) is required as a cofactor.

The protein localises to the cell membrane. It localises to the golgi apparatus. It is found in the trans-Golgi network membrane. It carries out the reaction ATP + H2O + phospholipidSide 1 = ADP + phosphate + phospholipidSide 2.. The enzyme catalyses a 1,2-diacyl-sn-glycero-3-phospho-L-serine(out) + ATP + H2O = a 1,2-diacyl-sn-glycero-3-phospho-L-serine(in) + ADP + phosphate + H(+). It catalyses the reaction a 1,2-diacyl-sn-glycero-3-phosphoethanolamine(out) + ATP + H2O = a 1,2-diacyl-sn-glycero-3-phosphoethanolamine(in) + ADP + phosphate + H(+). Catalytic component of a P4-ATPase flippase complex which catalyzes the hydrolysis of ATP coupled to the transport of phosphatidylserine and small amounts of ethanolamine from the lumen to the cytosolic leaflet of the trans-Golgi network and cell membrane and ensures the maintenance of asymmetric distribution of phospholipids. Required for efficient vesicle transport during toxin secretion. This is Phospholipid-transporting ATPase DRS2 (DRS2) from Verticillium dahliae (strain VdLs.17 / ATCC MYA-4575 / FGSC 10137) (Verticillium wilt).